A 307-amino-acid chain; its full sequence is GMP synthase [glutamine-hydrolyzing] subunit B (307 aa).

A GMPS ATP-PPase domain is found at 1–184; sequence MWENFIEEKV…LGLPEKIYNR (184 aa). 27 to 33 contributes to the ATP binding site; sequence SGGVDSS.

In terms of assembly, heterodimer composed of a glutamine amidotransferase subunit (A) and a GMP-binding subunit (B).

It catalyses the reaction XMP + L-glutamine + ATP + H2O = GMP + L-glutamate + AMP + diphosphate + 2 H(+). It functions in the pathway purine metabolism; GMP biosynthesis; GMP from XMP (L-Gln route): step 1/1. In terms of biological role, catalyzes the synthesis of GMP from XMP. The sequence is that of GMP synthase [glutamine-hydrolyzing] subunit B from Thermococcus kodakarensis (strain ATCC BAA-918 / JCM 12380 / KOD1) (Pyrococcus kodakaraensis (strain KOD1)).